We begin with the raw amino-acid sequence, 402 residues long: Dihydrolipoyllysine-residue acetyltransferase component of pyruvate dehydrogenase complex (402 aa).

Positions 2 to 77 (ANEFKFTDVG…HIGQVMAVID (76 aa)) constitute a Lipoyl-binding domain. Lys-43 is modified (N6-lipoyllysine). Disordered regions lie at residues 82–110 (AAAP…APVT) and 143–172 (PQPT…PSGE). 2 stretches are compositionally biased toward pro residues: residues 87-107 (APQP…PTPA) and 143-162 (PQPT…PTPA). The active site involves His-374.

This sequence belongs to the 2-oxoacid dehydrogenase family. As to quaternary structure, forms a 24-polypeptide structural core with octahedral symmetry. (R)-lipoate is required as a cofactor.

It carries out the reaction N(6)-[(R)-dihydrolipoyl]-L-lysyl-[protein] + acetyl-CoA = N(6)-[(R)-S(8)-acetyldihydrolipoyl]-L-lysyl-[protein] + CoA. In terms of biological role, the pyruvate dehydrogenase complex catalyzes the overall conversion of pyruvate to acetyl-CoA and CO(2). It contains multiple copies of three enzymatic components: pyruvate dehydrogenase (E1), dihydrolipoamide acetyltransferase (E2) and lipoamide dehydrogenase (E3). In Mycoplasma pneumoniae (strain ATCC 29342 / M129 / Subtype 1) (Mycoplasmoides pneumoniae), this protein is Dihydrolipoyllysine-residue acetyltransferase component of pyruvate dehydrogenase complex (pdhC).